A 231-amino-acid chain; its full sequence is Modulator of macroautophagy TMEM150B-B (231 aa).

Met1 is a topological domain (cytoplasmic). Residues 2 to 22 (WAWALLPICLTVWATGGIWIV) form a helical membrane-spanning segment. At 23–50 (YAMSVSNGSVNLSDGFPYISVSGTYPPQ) the chain is on the extracellular side. 2 N-linked (GlcNAc...) asparagine glycosylation sites follow: Asn29 and Asn33. The chain crosses the membrane as a helical span at residues 51 to 71 (SCVFGQVLNVGAMLAVWISVI). At 72–83 (RFQQIRDYNCHS) the chain is on the cytoplasmic side. The helical transmembrane segment at 84 to 104 (VLNSVSLATGILCALGTSIVG) threads the bilayer. Topologically, residues 105–115 (NFQQSNQLQTH) are extracellular. A helical transmembrane segment spans residues 116 to 136 (LAGAFLAFIIGNVYFWMQTAL). Topologically, residues 137–150 (TYMVKPKHGGCYIG) are cytoplasmic. A helical membrane pass occupies residues 151 to 171 (PIRFCLSIACTALIVAMAVFL). Residues 172 to 183 (KMNMKSVSAICE) are Extracellular-facing. The chain crosses the membrane as a helical span at residues 184–204 (WIVAMILFLLYGLFAVDFWHL). The Cytoplasmic portion of the chain corresponds to 205–231 (DGHFFHVKKRRTVIPNEMEVSTVTLSI).

This sequence belongs to the DRAM/TMEM150 family.

It localises to the cell membrane. The protein localises to the endosome membrane. It is found in the cytoplasmic vesicle. Its subcellular location is the autophagosome membrane. Functionally, modulator of macroautophagy that causes accumulation of autophagosomes under basal conditions and enhances autophagic flux. Represses cell death and promotes long-term clonogenic survival of cells grown in the absence of glucose in a macroautophagy-independent manner. May have some role in extracellular matrix engulfment or growth factor receptor recycling, both of which can modulate cell survival. The protein is Modulator of macroautophagy TMEM150B-B of Xenopus laevis (African clawed frog).